Reading from the N-terminus, the 65-residue chain is Potassium channel toxin kappa-KTx 2.7 (65 aa).

The N-terminal stretch at 1–26 (MKTSGTVYVFLLLLAFGIFTDISSAC) is a signal peptide. The propeptide occupies 27–39 (SEQMDDEDSYEVE). 2 disulfides stabilise this stretch: Cys45–Cys63 and Cys49–Cys59.

This sequence belongs to the short scorpion toxin superfamily. Potassium channel inhibitor kappa-KTx family. Kappa-KTx 2 subfamily. Expressed by the venom gland.

The protein localises to the secreted. Weakly inhibits the Kv7.1/KCNQ1 channel (10 uM of the toxin inhibits currents by 17.8%). The protein is Potassium channel toxin kappa-KTx 2.7 of Heterometrus petersii (Asian forest scorpion).